Reading from the N-terminus, the 274-residue chain is MEEEGYQWARRCGNNAVEDPFVYEPPLFFLPQDQHHMHGLMPNEDFIANKFVTSTLYSGPRIQDIANALALVEPLTHPVREISKSTVPLLERSTLSKVDRYTLKVKNNSNGMCDDGYKWRKYGQKSIKNSPNPRSYYKCTNPICNAKKQVERSIDESNTYIITYEGFHFHYTYPFFLPDKTRQWPNKKTKIHKHNAQDMNKKSQTQEESKEAQLGELTNQNHPVNKAQENTPANLEEGLFFPVDQCRPQQGLLEDVVAPAMKNIPTRDSVLTAS.

A DNA-binding region (WRKY) is located at residues 108 to 173; sequence NSNGMCDDGY…YEGFHFHYTY (66 aa). A disordered region spans residues 188 to 228; sequence KTKIHKHNAQDMNKKSQTQEESKEAQLGELTNQNHPVNKAQ. The stretch at 193–222 forms a coiled coil; the sequence is KHNAQDMNKKSQTQEESKEAQLGELTNQNH. Over residues 195-213 the composition is skewed to basic and acidic residues; sequence NAQDMNKKSQTQEESKEAQ. A compositionally biased stretch (polar residues) spans 216–228; the sequence is ELTNQNHPVNKAQ.

Belongs to the WRKY group II-c family.

The protein localises to the nucleus. Transcription factor. Interacts specifically with the W box (5'-(T)TGAC[CT]-3'), a frequently occurring elicitor-responsive cis-acting element. The polypeptide is Probable WRKY transcription factor 49 (WRKY49) (Arabidopsis thaliana (Mouse-ear cress)).